A 91-amino-acid polypeptide reads, in one-letter code: MKKKVDTEKQITSWASDLASKNETKVQEKLILSSYIQDIENHVYFPKAMISLEKKLRDQNNICALSKEVNQFYFKVVEVNQRKSWMVGLIV.

Its function is as follows. Imparts immunity to lactococcin-B to naturally sensitive host strains. The polypeptide is Lactococcin-B immunity protein (lciB) (Lactococcus lactis subsp. cremoris (Streptococcus cremoris)).